A 402-amino-acid chain; its full sequence is Olfactomedin-like protein 1 (402 aa).

The first 28 residues, 1–28 (MMVALRGASALLVLFLAAFLPPPQCTQD), serve as a signal peptide directing secretion. N-linked (GlcNAc...) asparagine glycosylation occurs at Asn-66. Positions 79–133 (SEYKSAVGNLALRVERAQREIDYIQYLREADECIESEDKTLAEMLLQEAEEEKKI) form a coiled coil. Residues Asn-138 and Asn-183 are each glycosylated (N-linked (GlcNAc...) asparagine). In terms of domain architecture, Olfactomedin-like spans 140–397 (SCDNMLMGIK…QIIYKLQTKR (258 aa)). Cys-141 and Cys-324 are oxidised to a cystine.

Post-translationally, highly N-glycosylated. Mainly expressed in the small intestine, liver, lung and heart.

The protein resides in the secreted. The polypeptide is Olfactomedin-like protein 1 (OLFML1) (Homo sapiens (Human)).